The primary structure comprises 320 residues: Ferrochelatase (320 aa).

Residues H194 and E275 each coordinate Fe cation.

It belongs to the ferrochelatase family.

Its subcellular location is the cytoplasm. The enzyme catalyses heme b + 2 H(+) = protoporphyrin IX + Fe(2+). It functions in the pathway porphyrin-containing compound metabolism; protoheme biosynthesis; protoheme from protoporphyrin-IX: step 1/1. Functionally, catalyzes the ferrous insertion into protoporphyrin IX. This chain is Ferrochelatase, found in Klebsiella pneumoniae (strain 342).